The chain runs to 490 residues: Glutamate--tRNA ligase (490 aa).

A 'HIGH' region motif is present at residues Pro9 to Gly19. Positions Lys251 to Arg255 match the 'KMSKS' region motif. Position 254 (Lys254) interacts with ATP.

This sequence belongs to the class-I aminoacyl-tRNA synthetase family. Glutamate--tRNA ligase type 1 subfamily. As to quaternary structure, monomer.

It localises to the cytoplasm. The catalysed reaction is tRNA(Glu) + L-glutamate + ATP = L-glutamyl-tRNA(Glu) + AMP + diphosphate. Catalyzes the attachment of glutamate to tRNA(Glu) in a two-step reaction: glutamate is first activated by ATP to form Glu-AMP and then transferred to the acceptor end of tRNA(Glu). This chain is Glutamate--tRNA ligase, found in Borreliella afzelii (strain PKo) (Borrelia afzelii).